A 450-amino-acid polypeptide reads, in one-letter code: Perilipin-2 (450 aa).

An N-acetylalanine modification is found at A2. S215 carries the post-translational modification Phosphoserine. At Y232 the chain carries Phosphotyrosine. The segment at 411–450 is disordered; sequence ESESAQAPGTTRRPGRWSRKHPKPVPVSNAEGSQPDDSSS. Residues 423-433 show a composition bias toward basic residues; it reads RPGRWSRKHPK. Positions 440–450 are enriched in polar residues; that stretch reads AEGSQPDDSSS.

This sequence belongs to the perilipin family. Interacts with IRGC. Post-translationally, acylated; primarily with C14, C16 and C18 fatty acids. Phosphorylation at Tyr-232 by isoform 1 of CHKA (CHKalpha2) promotes dissociation from lipid droplets: dissociation is followed by recruitment of autophagosome machinery to lipid droplets and subsequent lipid droplet lipolysis. In terms of processing, polyubiquitination of Nt-acetylatable A-PLIN2 by MARCHF6 lead to degradation by 26S proteasomes. Milk lipid globules.

It is found in the membrane. The protein localises to the lipid droplet. Its function is as follows. Structural component of lipid droplets, which is required for the formation and maintenance of lipid storage droplets. The polypeptide is Perilipin-2 (PLIN2) (Bos taurus (Bovine)).